The chain runs to 421 residues: 5-methylthioadenosine/S-adenosylhomocysteine deaminase (421 aa).

The Zn(2+) site is built by His-60 and His-62. Substrate-binding residues include Glu-89 and His-181. His-208 is a binding site for Zn(2+). Substrate is bound by residues Glu-211 and Asp-296. Asp-296 serves as a coordination point for Zn(2+).

It belongs to the metallo-dependent hydrolases superfamily. MTA/SAH deaminase family. Zn(2+) is required as a cofactor.

The catalysed reaction is S-adenosyl-L-homocysteine + H2O + H(+) = S-inosyl-L-homocysteine + NH4(+). It catalyses the reaction S-methyl-5'-thioadenosine + H2O + H(+) = S-methyl-5'-thioinosine + NH4(+). In terms of biological role, catalyzes the deamination of 5-methylthioadenosine and S-adenosyl-L-homocysteine into 5-methylthioinosine and S-inosyl-L-homocysteine, respectively. Is also able to deaminate adenosine. The polypeptide is 5-methylthioadenosine/S-adenosylhomocysteine deaminase (Pyrococcus horikoshii (strain ATCC 700860 / DSM 12428 / JCM 9974 / NBRC 100139 / OT-3)).